Here is a 316-residue protein sequence, read N- to C-terminus: tRNA dimethylallyltransferase (316 aa).

13–20 (GPTASGKT) lines the ATP pocket. 15–20 (TASGKT) lines the substrate pocket. 4 interaction with substrate tRNA regions span residues 38–41 (DSAL), 162–166 (QRINR), 243–248 (RCVGYR), and 276–283 (KRQITWLR).

Belongs to the IPP transferase family. Monomer. Requires Mg(2+) as cofactor.

It carries out the reaction adenosine(37) in tRNA + dimethylallyl diphosphate = N(6)-dimethylallyladenosine(37) in tRNA + diphosphate. Functionally, catalyzes the transfer of a dimethylallyl group onto the adenine at position 37 in tRNAs that read codons beginning with uridine, leading to the formation of N6-(dimethylallyl)adenosine (i(6)A). This chain is tRNA dimethylallyltransferase, found in Pasteurella multocida (strain Pm70).